The chain runs to 219 residues: Mucosal pentraxin (219 aa).

A signal peptide spans 1–19 (MEKLIVGTLLLTVLSGGIS). One can recognise a Pentraxin (PTX) domain in the interval 24–219 (DGKAFIFPQE…YVVTKPKLWT (196 aa)). Residues cysteine 55 and cysteine 114 are joined by a disulfide bond. 6 residues coordinate Ca(2+): aspartate 77, asparagine 78, glutamate 155, glutamine 156, aspartate 157, and glutamine 167.

Belongs to the pentraxin family. Homopentamer. Pentraxin (or pentaxin) have a discoid arrangement of 5 non-covalently bound subunits. Ca(2+) serves as cofactor. Expression is restricted to small intestine, stomach and colon. Within colon, expressed in epithelial cells located within the lower to mid region of transverse and distal crypts, but not in proximal colon.

Its subcellular location is the secreted. This is Mucosal pentraxin (Mptx1) from Rattus norvegicus (Rat).